A 378-amino-acid polypeptide reads, in one-letter code: Ubiquitin-conjugating enzyme E2 Q2 (378 aa).

The segment at 126–152 is disordered; the sequence is DQPLPTGQNGTTEEVTSEEEEEEEMAE. Positions 140 to 152 are enriched in acidic residues; that stretch reads VTSEEEEEEEMAE. Positions 207 to 371 constitute a UBC core domain; sequence QASDRLMKEL…VQIHEKNGWY (165 aa). The active-site Glycyl thioester intermediate is C307.

The protein belongs to the ubiquitin-conjugating enzyme family. In terms of processing, auto-ubiquitinated in vitro.

The protein localises to the cytoplasm. The enzyme catalyses S-ubiquitinyl-[E1 ubiquitin-activating enzyme]-L-cysteine + [E2 ubiquitin-conjugating enzyme]-L-cysteine = [E1 ubiquitin-activating enzyme]-L-cysteine + S-ubiquitinyl-[E2 ubiquitin-conjugating enzyme]-L-cysteine.. The protein operates within protein modification; protein ubiquitination. Accepts ubiquitin from the E1 complex and catalyzes its covalent attachment to other proteins. In vitro catalyzes 'Lys-48'-linked polyubiquitination. The sequence is that of Ubiquitin-conjugating enzyme E2 Q2 (Ube2q2) from Mus musculus (Mouse).